A 132-amino-acid chain; its full sequence is Ribosome-binding factor A (132 aa).

It belongs to the RbfA family. Monomer. Binds 30S ribosomal subunits, but not 50S ribosomal subunits or 70S ribosomes.

Its subcellular location is the cytoplasm. Its function is as follows. One of several proteins that assist in the late maturation steps of the functional core of the 30S ribosomal subunit. Associates with free 30S ribosomal subunits (but not with 30S subunits that are part of 70S ribosomes or polysomes). Required for efficient processing of 16S rRNA. May interact with the 5'-terminal helix region of 16S rRNA. This Pectobacterium atrosepticum (strain SCRI 1043 / ATCC BAA-672) (Erwinia carotovora subsp. atroseptica) protein is Ribosome-binding factor A.